A 212-amino-acid polypeptide reads, in one-letter code: Dephospho-CoA kinase (212 aa).

In terms of domain architecture, DPCK spans 3–207 (IIGLTGGIAS…RHLADDPEPG (205 aa)). 11–16 (ASGKST) provides a ligand contact to ATP.

This sequence belongs to the CoaE family.

Its subcellular location is the cytoplasm. It catalyses the reaction 3'-dephospho-CoA + ATP = ADP + CoA + H(+). Its pathway is cofactor biosynthesis; coenzyme A biosynthesis; CoA from (R)-pantothenate: step 5/5. In terms of biological role, catalyzes the phosphorylation of the 3'-hydroxyl group of dephosphocoenzyme A to form coenzyme A. The sequence is that of Dephospho-CoA kinase from Moorella thermoacetica (strain ATCC 39073 / JCM 9320).